A 93-amino-acid chain; its full sequence is Ubiquinol-cytochrome-c reductase complex assembly factor 3 (93 aa).

Residues 1-7 (MDSLRKM) are Mitochondrial matrix-facing. The helical transmembrane segment at 8 to 28 (LISVAMLGAGAGVGYALLVIV) threads the bilayer. A mediates lipid-binding region spans residues 23 to 80 (ALLVIVTPGERRKQEMLKEMPLQDPRSREEAARTQQLLLATLQEAATTQENVAWRKNW). The Mitochondrial intermembrane portion of the chain corresponds to 29 to 93 (TPGERRKQEM…GEGGAGGRSP (65 aa)).

This sequence belongs to the UQCC3 family. As to quaternary structure, associates with the ubiquinol-cytochrome c reductase complex (mitochondrial respiratory chain complex III or cytochrome b-c1 complex). Interacts with UQCC1. Forms a complex, named COMC, composed of UQCC1, UQCC2; UQCC3 and UQCC4; mediates MT-CYB hemylation and association with the first nuclear-encoded complex III subunit UQCRQ. Post-translationally, probably cleaved by OMA1 under mitochondrial stress conditions.

Its subcellular location is the mitochondrion inner membrane. Its function is as follows. Required for the assembly of the ubiquinol-cytochrome c reductase complex (mitochondrial respiratory chain complex III or cytochrome b-c1 complex), mediating cytochrome b recruitment and probably stabilization within the complex. Thereby, plays an important role in ATP production by mitochondria. Cardiolipin-binding protein, it may also control the cardiolipin composition of mitochondria membranes and their morphology. In Homo sapiens (Human), this protein is Ubiquinol-cytochrome-c reductase complex assembly factor 3.